Reading from the N-terminus, the 443-residue chain is CBL-interacting protein kinase 2 (443 aa).

The Protein kinase domain occupies 13-267; sequence YEMGKLLGQG…MDKIMENPWF (255 aa). ATP contacts are provided by residues 19–27 and Lys42; that span reads LGQGTFAKV. Residue Asp135 is the Proton acceptor of the active site. Positions 153–182 are activation loop; the sequence is DFGLSALADCKRQDGLLHTTCGTPAYVAPE. The NAF domain occupies 302-329; that stretch reads TLEKKPSNLNAFDIISLSTGLDLSGMFE. Residues 333-362 are PPI; that stretch reads KKESKFTSTSTASTIISKIEDIAKGLRLKL.

This sequence belongs to the protein kinase superfamily. CAMK Ser/Thr protein kinase family. SNF1 subfamily. Mn(2+) serves as cofactor.

The catalysed reaction is L-seryl-[protein] + ATP = O-phospho-L-seryl-[protein] + ADP + H(+). It catalyses the reaction L-threonyl-[protein] + ATP = O-phospho-L-threonyl-[protein] + ADP + H(+). Functionally, CIPK serine-threonine protein kinases interact with CBL proteins. Binding of a CBL protein to the regulatory NAF domain of CIPK protein lead to the activation of the kinase in a calcium-dependent manner. In Oryza sativa subsp. japonica (Rice), this protein is CBL-interacting protein kinase 2 (CIPK2).